A 486-amino-acid polypeptide reads, in one-letter code: NADH-quinone oxidoreductase subunit N (486 aa).

The next 14 membrane-spanning stretches (helical) occupy residues 14 to 34 (SIAP…LNFI), 45 to 65 (MLAI…SGIV), 77 to 97 (FAFI…PLTL), 105 to 125 (CSLA…EFMV), 130 to 150 (LIVI…LIAL), 163 to 183 (YFTM…IFYL), 203 to 223 (ILIA…LSLI), 237 to 257 (SEVM…IVAM), 268 to 288 (IAFI…LANI), 299 to 319 (MLAF…VIGT), 326 to 346 (LFLY…VLWF), 377 to 397 (FLMA…VFWG), 409 to 429 (GFIF…YYYL), and 459 to 479 (FIIT…KFWT).

Belongs to the complex I subunit 2 family. NDH-1 is composed of 14 different subunits. Subunits NuoA, H, J, K, L, M, N constitute the membrane sector of the complex.

The protein localises to the cell inner membrane. It carries out the reaction a quinone + NADH + 5 H(+)(in) = a quinol + NAD(+) + 4 H(+)(out). NDH-1 shuttles electrons from NADH, via FMN and iron-sulfur (Fe-S) centers, to quinones in the respiratory chain. The immediate electron acceptor for the enzyme in this species is believed to be ubiquinone. Couples the redox reaction to proton translocation (for every two electrons transferred, four hydrogen ions are translocated across the cytoplasmic membrane), and thus conserves the redox energy in a proton gradient. This is NADH-quinone oxidoreductase subunit N from Campylobacter hominis (strain ATCC BAA-381 / DSM 21671 / CCUG 45161 / LMG 19568 / NCTC 13146 / CH001A).